The following is a 277-amino-acid chain: Diaminopimelate epimerase (277 aa).

The substrate site is built by asparagine 11 and asparagine 65. Cysteine 74 (proton donor) is an active-site residue. Substrate-binding positions include 75–76 (GN), asparagine 180, and 198–199 (ER). The Proton acceptor role is filled by cysteine 208. Position 209–210 (209–210 (GT)) interacts with substrate.

It belongs to the diaminopimelate epimerase family. As to quaternary structure, homodimer.

It is found in the cytoplasm. The enzyme catalyses (2S,6S)-2,6-diaminopimelate = meso-2,6-diaminopimelate. It participates in amino-acid biosynthesis; L-lysine biosynthesis via DAP pathway; DL-2,6-diaminopimelate from LL-2,6-diaminopimelate: step 1/1. Catalyzes the stereoinversion of LL-2,6-diaminopimelate (L,L-DAP) to meso-diaminopimelate (meso-DAP), a precursor of L-lysine and an essential component of the bacterial peptidoglycan. The chain is Diaminopimelate epimerase from Gemmatimonas aurantiaca (strain DSM 14586 / JCM 11422 / NBRC 100505 / T-27).